Consider the following 117-residue polypeptide: Large ribosomal subunit protein bL20 (117 aa).

This sequence belongs to the bacterial ribosomal protein bL20 family.

In terms of biological role, binds directly to 23S ribosomal RNA and is necessary for the in vitro assembly process of the 50S ribosomal subunit. It is not involved in the protein synthesizing functions of that subunit. The polypeptide is Large ribosomal subunit protein bL20 (Symbiobacterium thermophilum (strain DSM 24528 / JCM 14929 / IAM 14863 / T)).